The sequence spans 398 residues: MYVDPMNNNEIRKLSITAKTETTPDNVGQDIPVNAHSVHEECSSNTPVEINGRNSGKLKEEASAGICLVKKPMLQYRDTSGKYSLSDFQILRTLGTGSFGRVHLIRSNHNGRFYALKTLKKHTIVKLKQVEHTNDERRMLSIVSHPFIIRMWGTFQDSQQVFMVMDYIEGGELFSLLRKSQRFPNPVAKFYAAEVCLALEYLHSKDIIYRDLKPENILLDKNGHIKITDFGFAKYVPDVTYTLCGTPDYIAPEVVSTKPYNKSVDWWSFGVLIYEMLAGYTPFYNSNTMKTYENILNAELKFPPFFHPDAQDLLKKLITRDLSERLGNLQNGSEDVKNHPWFNEVIWEKLLARYIETPYEPPIQQGQGDTSQFDRYPEEEFNYGIQGEDPYMDLMKEF.

Phosphoserine is present on residues Ser-15 and Ser-55. The Protein kinase domain occupies 88–342 (FQILRTLGTG…SEDVKNHPWF (255 aa)). Residues 94 to 102 (LGTGSFGRV) and Lys-117 each bind ATP. Asp-211 (proton acceptor) is an active-site residue. Residues 343–398 (NEVIWEKLLARYIETPYEPPIQQGQGDTSQFDRYPEEEFNYGIQGEDPYMDLMKEF) enclose the AGC-kinase C-terminal domain.

Belongs to the protein kinase superfamily. AGC Ser/Thr protein kinase family. cAMP subfamily.

It carries out the reaction L-seryl-[protein] + ATP = O-phospho-L-seryl-[protein] + ADP + H(+). The enzyme catalyses L-threonyl-[protein] + ATP = O-phospho-L-threonyl-[protein] + ADP + H(+). With respect to regulation, activated by cAMP. This Saccharomyces cerevisiae (strain ATCC 204508 / S288c) (Baker's yeast) protein is cAMP-dependent protein kinase type 3 (TPK3).